Consider the following 310-residue polypeptide: Glutaminase (310 aa).

Residues serine 67, asparagine 118, glutamate 161, asparagine 168, tyrosine 192, tyrosine 244, and valine 262 each coordinate substrate.

This sequence belongs to the glutaminase family. Homotetramer.

It carries out the reaction L-glutamine + H2O = L-glutamate + NH4(+). This chain is Glutaminase, found in Legionella pneumophila (strain Corby).